Consider the following 111-residue polypeptide: UPF0060 membrane protein CPR_1507 (111 aa).

The next 4 helical transmembrane spans lie at 7–27, 33–53, 60–80, and 85–105; these read IFYF…IWLW, SLIY…IPTL, FGRV…LCGW, and IIPD…VLII.

This sequence belongs to the UPF0060 family.

It localises to the cell membrane. The chain is UPF0060 membrane protein CPR_1507 from Clostridium perfringens (strain SM101 / Type A).